The following is a 600-amino-acid chain: DNA mismatch repair protein MutL (600 aa).

Residues 327–405 (DGSRAATTGA…FSPQPAAAEP (79 aa)) form a disordered region. Positions 349–367 (PNSQRPQTAWSAETSSSRP) are enriched in polar residues.

The protein belongs to the DNA mismatch repair MutL/HexB family.

Functionally, this protein is involved in the repair of mismatches in DNA. It is required for dam-dependent methyl-directed DNA mismatch repair. May act as a 'molecular matchmaker', a protein that promotes the formation of a stable complex between two or more DNA-binding proteins in an ATP-dependent manner without itself being part of a final effector complex. This chain is DNA mismatch repair protein MutL, found in Rhizobium johnstonii (strain DSM 114642 / LMG 32736 / 3841) (Rhizobium leguminosarum bv. viciae).